The sequence spans 563 residues: Phosphomethylpyrimidine synthase (563 aa).

A disordered region spans residues 95–115; that stretch reads PGKNPSPMNNRTPVRAKQGKS. Substrate is bound by residues N200, M229, Y258, H294, 314-316, 355-358, and E394; these read SRG and DALR. H398 contacts Zn(2+). A substrate-binding site is contributed by Y421. Residue H462 participates in Zn(2+) binding. Positions 544, 547, and 552 each coordinate [4Fe-4S] cluster.

It belongs to the ThiC family. Requires [4Fe-4S] cluster as cofactor.

The catalysed reaction is 5-amino-1-(5-phospho-beta-D-ribosyl)imidazole + S-adenosyl-L-methionine = 4-amino-2-methyl-5-(phosphooxymethyl)pyrimidine + CO + 5'-deoxyadenosine + formate + L-methionine + 3 H(+). It participates in cofactor biosynthesis; thiamine diphosphate biosynthesis. Functionally, catalyzes the synthesis of the hydroxymethylpyrimidine phosphate (HMP-P) moiety of thiamine from aminoimidazole ribotide (AIR) in a radical S-adenosyl-L-methionine (SAM)-dependent reaction. The protein is Phosphomethylpyrimidine synthase of Chlorobium phaeobacteroides (strain BS1).